Here is a 693-residue protein sequence, read N- to C-terminus: Polyribonucleotide nucleotidyltransferase (693 aa).

Mg(2+) contacts are provided by aspartate 490 and aspartate 496. The region spanning 557–617 (PRISWFFIDP…EKVQEAVEYI (61 aa)) is the KH domain. Residues 627–691 (GDLYTGKVTR…DAGRLQFRRL (65 aa)) form the S1 motif domain.

This sequence belongs to the polyribonucleotide nucleotidyltransferase family. The cofactor is Mg(2+).

It is found in the cytoplasm. The catalysed reaction is RNA(n+1) + phosphate = RNA(n) + a ribonucleoside 5'-diphosphate. In terms of biological role, involved in mRNA degradation. Catalyzes the phosphorolysis of single-stranded polyribonucleotides processively in the 3'- to 5'-direction. This chain is Polyribonucleotide nucleotidyltransferase, found in Fervidobacterium nodosum (strain ATCC 35602 / DSM 5306 / Rt17-B1).